Here is a 343-residue protein sequence, read N- to C-terminus: 3-dehydroquinate synthase (343 aa).

NAD(+) contacts are provided by residues 86–90 (GALLD), 110–111 (TT), K123, and K132. 3 residues coordinate Zn(2+): E165, H229, and H243.

The protein belongs to the sugar phosphate cyclases superfamily. Dehydroquinate synthase family. Requires Co(2+) as cofactor. The cofactor is Zn(2+). NAD(+) is required as a cofactor.

It localises to the cytoplasm. It catalyses the reaction 7-phospho-2-dehydro-3-deoxy-D-arabino-heptonate = 3-dehydroquinate + phosphate. It participates in metabolic intermediate biosynthesis; chorismate biosynthesis; chorismate from D-erythrose 4-phosphate and phosphoenolpyruvate: step 2/7. Catalyzes the conversion of 3-deoxy-D-arabino-heptulosonate 7-phosphate (DAHP) to dehydroquinate (DHQ). This Pyrobaculum islandicum (strain DSM 4184 / JCM 9189 / GEO3) protein is 3-dehydroquinate synthase.